The following is a 146-amino-acid chain: Snaclec agkisacutacin subunit B (146 aa).

Positions 1-23 are cleaved as a signal peptide; the sequence is MGRFIFVSFGLLVVFLSLSGTAA. Positions 24–146 constitute a C-type lectin domain; the sequence is DCPSDWSSYE…TCSFVCKFQA (123 aa). 3 disulfide bridges follow: cysteine 25–cysteine 36, cysteine 53–cysteine 142, and cysteine 119–cysteine 134. Ca(2+) contacts are provided by serine 64 and glutamate 70.

This sequence belongs to the snaclec family. In terms of assembly, heterodimer of subunits A and B; disulfide-linked. In terms of tissue distribution, expressed by the venom gland.

The protein resides in the secreted. Functionally, anticoagulant protein which binds to the gamma-carboxyglutamic acid-domain regions of factor IX (F9) and factor X (F10) in the presence of calcium with a 1 to 1 stoichiometry. Also inhibits platelet aggregation by binding to platelet glycoprotein Ibalpha (GP1BA) and functioning as a blocker of von Willebrand factor (VWF). Is devoid of hemorrhagic and lethal activities. Possesses antithrombotic and thrombolytic activities. Also hydrolyzes the Aalpha-chain of fibrinogen (FGA). Does not affect the Bbeta-chain (FGB) and the gamma chain (FGG). The polypeptide is Snaclec agkisacutacin subunit B (Deinagkistrodon acutus (Hundred-pace snake)).